The sequence spans 589 residues: Intermediate filament protein ifb-1 (589 aa).

Positions 1–42 are disordered; that stretch reads MSSHKESSEYEMQYRSTIQPRTAVRSQSRQSGNYVSGGNGAG. The head stretch occupies residues 8–84; sequence SEYEMQYRST…LEATDKEKKT (77 aa). Polar residues predominate over residues 14-30; it reads YRSTIQPRTAVRSQSRQ. The region spanning 81 to 433 is the IF rod domain; it reads EKKTLQGLND…KMLEGEETRV (353 aa). The tract at residues 85 to 116 is coil 1A; sequence LQGLNDRLGNYIDRVKKLEEQNRKLVADLDEL. A linker 1 region spans residues 117–130; that stretch reads RGKWGKDTSEIKIK. Residues 131–268 form a coil 1B region; the sequence is YSESLSTARK…RVHEQEVKEL (138 aa). The interval 269–285 is linker 12; that stretch reads QALLAQAPADTREFFKN. Residues 286-433 form a coil 2 region; sequence ELALAIRDIK…KMLEGEETRV (148 aa). A tail region spans residues 434–588; sequence GLTQMVEQAV…THTQKTIQSG (155 aa). A disordered region spans residues 444–470; it reads KTHSLQQQENTDSTRSVRGEVSTKTTF. The LTD domain maps to 466 to 584; it reads TKTTFQRSAK…EERATHTQKT (119 aa).

The protein belongs to the intermediate filament family. As to quaternary structure, forms some heteromeric filaments with ifa-1, ifa-2, ifa-3 and probably ifa-4. As to expression, expressed in epidermal cells. Expressed in amphid sensory neurons, the excretory cells, the vulva, the uterus, the rectum and some neurons of the tail. Isoform a and isoform b display a similar pattern of expression. Isoform a is predominant in pharyngeal tonofilaments.

The protein localises to the cytoplasm. Its function is as follows. Cytoplasmic intermediate filaments provide mechanical strength to cells. Essential protein, involved in attachment structures in epidermal cells that connect muscles to the external cuticle. Required in morphogenesis and epidermal integrity. Probable component of embryonic epidermal attachment structures. Functions in larval muscle attachment independently of ifa-2. The chain is Intermediate filament protein ifb-1 (ifb-1) from Caenorhabditis elegans.